We begin with the raw amino-acid sequence, 101 residues long: UPF0473 protein str1961 (101 aa).

It belongs to the UPF0473 family.

The chain is UPF0473 protein str1961 from Streptococcus thermophilus (strain CNRZ 1066).